The chain runs to 526 residues: Sterol 14-alpha demethylase CYP51A (526 aa).

A helical transmembrane segment spans residues 27–47 (IGFAVFLVLSVVLNVLNQLLF). Tyrosine 123 contributes to the lanosterol binding site. Cysteine 470 is a binding site for heme.

It belongs to the cytochrome P450 family. It depends on heme as a cofactor.

Its subcellular location is the endoplasmic reticulum membrane. The enzyme catalyses a 14alpha-methyl steroid + 3 reduced [NADPH--hemoprotein reductase] + 3 O2 = a Delta(14) steroid + formate + 3 oxidized [NADPH--hemoprotein reductase] + 4 H2O + 4 H(+). It catalyses the reaction a 14alpha-methyl steroid + reduced [NADPH--hemoprotein reductase] + O2 = a 14alpha-hydroxymethyl steroid + oxidized [NADPH--hemoprotein reductase] + H2O + H(+). The catalysed reaction is a 14alpha-hydroxymethyl steroid + reduced [NADPH--hemoprotein reductase] + O2 = a 14alpha-formyl steroid + oxidized [NADPH--hemoprotein reductase] + 2 H2O + H(+). It carries out the reaction a 14alpha-formyl steroid + reduced [NADPH--hemoprotein reductase] + O2 = a Delta(14) steroid + formate + oxidized [NADPH--hemoprotein reductase] + H2O + 2 H(+). The enzyme catalyses lanosterol + 3 reduced [NADPH--hemoprotein reductase] + 3 O2 = 4,4-dimethyl-5alpha-cholesta-8,14,24-trien-3beta-ol + formate + 3 oxidized [NADPH--hemoprotein reductase] + 4 H2O + 4 H(+). It catalyses the reaction lanosterol + reduced [NADPH--hemoprotein reductase] + O2 = 32-hydroxylanosterol + oxidized [NADPH--hemoprotein reductase] + H2O + H(+). The catalysed reaction is 32-hydroxylanosterol + reduced [NADPH--hemoprotein reductase] + O2 = 32-oxolanosterol + oxidized [NADPH--hemoprotein reductase] + 2 H2O + H(+). It carries out the reaction 32-oxolanosterol + reduced [NADPH--hemoprotein reductase] + O2 = 4,4-dimethyl-5alpha-cholesta-8,14,24-trien-3beta-ol + formate + oxidized [NADPH--hemoprotein reductase] + H2O + 2 H(+). The enzyme catalyses eburicol + 3 reduced [NADPH--hemoprotein reductase] + 3 O2 = 14-demethyleburicol + formate + 3 oxidized [NADPH--hemoprotein reductase] + 4 H2O + 4 H(+). It catalyses the reaction eburicol + reduced [NADPH--hemoprotein reductase] + O2 = 32-hydroxyeburicol + oxidized [NADPH--hemoprotein reductase] + H2O + H(+). The catalysed reaction is 32-hydroxyeburicol + reduced [NADPH--hemoprotein reductase] + O2 = 32-oxoeburicol + oxidized [NADPH--hemoprotein reductase] + 2 H2O + H(+). It carries out the reaction 32-oxoeburicol + reduced [NADPH--hemoprotein reductase] + O2 = 14-demethyleburicol + formate + oxidized [NADPH--hemoprotein reductase] + H2O + 2 H(+). It functions in the pathway steroid metabolism; ergosterol biosynthesis. Functionally, together with cyp51A and cyp51C, encodes the sterol 14alpha-demethylase that plays a critical role in the third module of ergosterol biosynthesis pathway, being ergosterol the major sterol component in fungal membranes that participates in a variety of functions. Essential for ascospore production. The third module or late pathway involves the ergosterol synthesis itself through consecutive reactions that mainly occur in the endoplasmic reticulum (ER) membrane. In filamentous fungi, during the initial step of this module, lanosterol (lanosta-8,24-dien-3beta-ol) can be metabolized to eburicol. Sterol 14alpha-demethylase catalyzes the three-step oxidative removal of the 14alpha-methyl group (C-32) of both these sterols in the form of formate, and converts eburicol and lanosterol to 14-demethyleburicol (4,4,24-trimethylergosta-8,14,24(28)-trienol) and 4,4-dimethyl-5alpha-cholesta-8,14,24-trien-3beta-ol, respectively, which are further metabolized by other enzymes in the pathway to ergosterol. Can also use substrates not intrinsic to fungi, such as 24,25-dihydrolanosterol (DHL), producing 4,4'-dimethyl-8,14-cholestadien-3-beta-ol, but at lower rates than the endogenous substrates. This chain is Sterol 14-alpha demethylase CYP51A, found in Gibberella zeae (strain ATCC MYA-4620 / CBS 123657 / FGSC 9075 / NRRL 31084 / PH-1) (Wheat head blight fungus).